A 210-amino-acid polypeptide reads, in one-letter code: Holliday junction resolvase RecU (210 aa).

Residues T87, D89, E102, and Q121 each coordinate Mg(2+).

It belongs to the RecU family. Requires Mg(2+) as cofactor.

The protein resides in the cytoplasm. It catalyses the reaction Endonucleolytic cleavage at a junction such as a reciprocal single-stranded crossover between two homologous DNA duplexes (Holliday junction).. In terms of biological role, endonuclease that resolves Holliday junction intermediates in genetic recombination. Cleaves mobile four-strand junctions by introducing symmetrical nicks in paired strands. Promotes annealing of linear ssDNA with homologous dsDNA. Required for DNA repair, homologous recombination and chromosome segregation. The polypeptide is Holliday junction resolvase RecU (Lactobacillus delbrueckii subsp. bulgaricus (strain ATCC 11842 / DSM 20081 / BCRC 10696 / JCM 1002 / NBRC 13953 / NCIMB 11778 / NCTC 12712 / WDCM 00102 / Lb 14)).